The chain runs to 128 residues: uncharacterized protein (128 aa).

The next 3 helical transmembrane spans lie at 1–21 (MLVF…LIFL), 51–71 (VRVE…AILG), and 76–96 (ANFL…VYYV).

It is found in the membrane. This is an uncharacterized protein from Saccharomyces cerevisiae (strain ATCC 204508 / S288c) (Baker's yeast).